A 446-amino-acid polypeptide reads, in one-letter code: Tol-Pal system protein TolB (446 aa).

A signal peptide spans 1 to 43 (MRKLWAPNWLSRRQNANPTRDQSRHALMAWLAAALMSAGAAHA).

The protein belongs to the TolB family. As to quaternary structure, the Tol-Pal system is composed of five core proteins: the inner membrane proteins TolA, TolQ and TolR, the periplasmic protein TolB and the outer membrane protein Pal. They form a network linking the inner and outer membranes and the peptidoglycan layer.

The protein localises to the periplasm. In terms of biological role, part of the Tol-Pal system, which plays a role in outer membrane invagination during cell division and is important for maintaining outer membrane integrity. This is Tol-Pal system protein TolB from Cupriavidus metallidurans (strain ATCC 43123 / DSM 2839 / NBRC 102507 / CH34) (Ralstonia metallidurans).